Here is a 255-residue protein sequence, read N- to C-terminus: Large ribosomal subunit protein uL4 (255 aa).

This sequence belongs to the universal ribosomal protein uL4 family. Part of the 50S ribosomal subunit.

Its function is as follows. One of the primary rRNA binding proteins, this protein initially binds near the 5'-end of the 23S rRNA. It is important during the early stages of 50S assembly. It makes multiple contacts with different domains of the 23S rRNA in the assembled 50S subunit and ribosome. Functionally, forms part of the polypeptide exit tunnel. The chain is Large ribosomal subunit protein uL4 from Pyrococcus abyssi (strain GE5 / Orsay).